Reading from the N-terminus, the 187-residue chain is Apolipophorin-3 (187 aa).

Residues 1–17 (MAAKFIILLALFALSQA) form the signal peptide. A propeptide spanning residues 18 to 22 (SVVRR) is cleaved from the precursor.

It belongs to the insect apolipophorin-3 family. In terms of assembly, equilibrium between a soluble monomer and a bound lipoprotein form. Apolipophorin-3 associates with lipophorin during lipid loading until each particle contains 9 or 14 molecules of apolipophorin-3. In terms of tissue distribution, hemolymph.

The protein localises to the secreted. Functionally, assists in the loading of diacylglycerol, generated from triacylglycerol stores in the fat body through the action of adipokinetic hormone, into lipophorin, the hemolymph lipoprotein. It increases the lipid carrying capacity of lipophorin by covering the expanding hydrophobic surface resulting from diacylglycerol uptake. It thus plays a critical role in the transport of lipids during flight in several species of insects. In Hyphantria cunea (Fall webworm moth), this protein is Apolipophorin-3.